Consider the following 457-residue polypeptide: Argininosuccinate lyase (457 aa).

This sequence belongs to the lyase 1 family. Argininosuccinate lyase subfamily.

Its subcellular location is the cytoplasm. The enzyme catalyses 2-(N(omega)-L-arginino)succinate = fumarate + L-arginine. Its pathway is amino-acid biosynthesis; L-arginine biosynthesis; L-arginine from L-ornithine and carbamoyl phosphate: step 3/3. The protein is Argininosuccinate lyase of Haemophilus influenzae (strain PittGG).